Reading from the N-terminus, the 321-residue chain is Fe-S cluster assembly protein DRE2 (321 aa).

The segment at 1–131 is N-terminal SAM-like domain; it reads MERMLLLSPP…KPDFGPENIV (131 aa). The interval 132–213 is linker; sequence PLKLGKRKPV…EETLLDGEDM (82 aa). [2Fe-2S] cluster-binding residues include Cys-223, Cys-234, Cys-237, and Cys-239. Positions 223 to 239 are fe-S binding site A; that stretch reads CRPKAGKRRRACKDCTC. Positions 284, 287, 295, and 298 each coordinate [4Fe-4S] cluster. 2 consecutive short sequence motifs (cx2C motif) follow at residues 284-287 and 295-298; these read CGNC and CDGC. Residues 284 to 298 form a fe-S binding site B region; the sequence is CGNCALGDAFRCDGC.

Belongs to the anamorsin family. In terms of assembly, monomer. Interacts with TAH18. Interacts with MIA40. [2Fe-2S] cluster is required as a cofactor. Requires [4Fe-4S] cluster as cofactor.

It localises to the cytoplasm. The protein resides in the mitochondrion intermembrane space. Component of the cytosolic iron-sulfur (Fe-S) protein assembly (CIA) machinery required for the maturation of extramitochondrial Fe-S proteins. Part of an electron transfer chain functioning in an early step of cytosolic Fe-S biogenesis, facilitating the de novo assembly of a [4Fe-4S] cluster on the scaffold complex CFD1-NBP35. Electrons are transferred to DRE2 from NADPH via the FAD- and FMN-containing protein TAH18. TAH18-DRE2 are also required for the assembly of the diferric tyrosyl radical cofactor of ribonucleotide reductase (RNR), probably by providing electrons for reduction during radical cofactor maturation in the catalytic small subunit RNR2. This is Fe-S cluster assembly protein DRE2 from Coccidioides posadasii (strain C735) (Valley fever fungus).